The following is a 201-amino-acid chain: Proteasome subunit beta 1 (201 aa).

Positions 1–10 (MNGSPSAMKG) are cleaved as a propeptide — removed in mature form; by autocatalysis. Thr11 serves as the catalytic Nucleophile.

Belongs to the peptidase T1B family. The 20S proteasome core is composed of 14 alpha and 14 beta subunits that assemble into four stacked heptameric rings, resulting in a barrel-shaped structure. The two inner rings, each composed of seven catalytic beta subunits, are sandwiched by two outer rings, each composed of seven alpha subunits. The catalytic chamber with the active sites is on the inside of the barrel. Has a gated structure, the ends of the cylinder being occluded by the N-termini of the alpha-subunits. Is capped at one or both ends by the proteasome regulatory ATPase, PAN.

It is found in the cytoplasm. The enzyme catalyses Cleavage of peptide bonds with very broad specificity.. Its activity is regulated as follows. The formation of the proteasomal ATPase PAN-20S proteasome complex, via the docking of the C-termini of PAN into the intersubunit pockets in the alpha-rings, triggers opening of the gate for substrate entry. Interconversion between the open-gate and close-gate conformations leads to a dynamic regulation of the 20S proteasome proteolysis activity. Functionally, component of the proteasome core, a large protease complex with broad specificity involved in protein degradation. This is Proteasome subunit beta 1 from Thermococcus gammatolerans (strain DSM 15229 / JCM 11827 / EJ3).